A 190-amino-acid chain; its full sequence is 6,7-dimethyl-8-ribityllumazine synthase (190 aa).

Residues Trp31, Ser65 to Glu67, and Cys89 to Ile91 each bind 5-amino-6-(D-ribitylamino)uracil. Glu94 to Thr95 is a binding site for (2S)-2-hydroxy-3-oxobutyl phosphate. His97 (proton donor) is an active-site residue. Phe122 is a 5-amino-6-(D-ribitylamino)uracil binding site. Arg136 provides a ligand contact to (2S)-2-hydroxy-3-oxobutyl phosphate.

The protein belongs to the DMRL synthase family.

It catalyses the reaction (2S)-2-hydroxy-3-oxobutyl phosphate + 5-amino-6-(D-ribitylamino)uracil = 6,7-dimethyl-8-(1-D-ribityl)lumazine + phosphate + 2 H2O + H(+). It participates in cofactor biosynthesis; riboflavin biosynthesis; riboflavin from 2-hydroxy-3-oxobutyl phosphate and 5-amino-6-(D-ribitylamino)uracil: step 1/2. Catalyzes the formation of 6,7-dimethyl-8-ribityllumazine by condensation of 5-amino-6-(D-ribitylamino)uracil with 3,4-dihydroxy-2-butanone 4-phosphate. This is the penultimate step in the biosynthesis of riboflavin. The protein is 6,7-dimethyl-8-ribityllumazine synthase of Flavobacterium johnsoniae (strain ATCC 17061 / DSM 2064 / JCM 8514 / BCRC 14874 / CCUG 350202 / NBRC 14942 / NCIMB 11054 / UW101) (Cytophaga johnsonae).